The chain runs to 186 residues: Protein GrpE (186 aa).

A compositionally biased stretch (polar residues) spans 1-15 (MADEQQTLDQQTPEQ). The tract at residues 1–20 (MADEQQTLDQQTPEQPTGAA) is disordered.

Belongs to the GrpE family. Homodimer.

The protein resides in the cytoplasm. Functionally, participates actively in the response to hyperosmotic and heat shock by preventing the aggregation of stress-denatured proteins, in association with DnaK and GrpE. It is the nucleotide exchange factor for DnaK and may function as a thermosensor. Unfolded proteins bind initially to DnaJ; upon interaction with the DnaJ-bound protein, DnaK hydrolyzes its bound ATP, resulting in the formation of a stable complex. GrpE releases ADP from DnaK; ATP binding to DnaK triggers the release of the substrate protein, thus completing the reaction cycle. Several rounds of ATP-dependent interactions between DnaJ, DnaK and GrpE are required for fully efficient folding. This is Protein GrpE from Pseudomonas aeruginosa (strain UCBPP-PA14).